Reading from the N-terminus, the 293-residue chain is uncharacterized protein (293 aa).

Over residues 1–10 (MHMQLRKRKR) the composition is skewed to basic residues. Positions 1–28 (MHMQLRKRKRVDYSGRNQTSDPPSTTTA) are disordered. Residues 15-28 (GRNQTSDPPSTTTA) show a composition bias toward polar residues.

The protein localises to the nucleus. This is an uncharacterized protein from Saccharomyces cerevisiae (strain ATCC 204508 / S288c) (Baker's yeast).